Consider the following 444-residue polypeptide: MQAASKAGHNVVVVGTQWGDEGKGKVVDWLTDHAAAVVRFQGGHNAGHTLVIKGKKTALQLIPSGVMRDGVACYIGNGVVVDPAHLLGEIERLEAAGVEVRSRLFISESCPLILPFHVEVDKAREALRESSGAGKIGTTGKGIGPAYEDKVARRALRVQDLKHPDRFAKKLRDLLELHNFVLQGFLKAEALEFPPIFDHAMNVAEQLKPMLADVGVRIHETNLAGGSVLFEGAQGTLLDIDHGTYPYVTSSNCVAGNAAAGSGVGPDKLHYILGITKAYTTRVGSGPFPTELPMDEPGTVGHHLSTVGQERGTVTGRPRRCGWLDAAAMKRSILINGLTGLCITKLDVLDGLTEIKMGVGYELDGRRIDILPLDADEIVACKPVYESFPGWTGSTVGTTRWDDLPLNARRYLERVQEVIGAPIDMVSTGPDREHTILLRHPYQG.

Residues 19 to 25 (GDEGKGK) and 47 to 49 (GHT) each bind GTP. The active-site Proton acceptor is D20. The Mg(2+) site is built by D20 and G47. IMP-binding positions include 20 to 23 (DEGK), 45 to 48 (NAGH), T139, R153, Q234, T249, and R317. H48 serves as the catalytic Proton donor. 313-319 (TVTGRPR) is a binding site for substrate. Residues R319, 345-347 (KLD), and 427-429 (STG) contribute to the GTP site.

The protein belongs to the adenylosuccinate synthetase family. Homodimer. Mg(2+) is required as a cofactor.

Its subcellular location is the cytoplasm. The catalysed reaction is IMP + L-aspartate + GTP = N(6)-(1,2-dicarboxyethyl)-AMP + GDP + phosphate + 2 H(+). It participates in purine metabolism; AMP biosynthesis via de novo pathway; AMP from IMP: step 1/2. Its function is as follows. Plays an important role in the de novo pathway of purine nucleotide biosynthesis. Catalyzes the first committed step in the biosynthesis of AMP from IMP. This chain is Adenylosuccinate synthetase, found in Methylibium petroleiphilum (strain ATCC BAA-1232 / LMG 22953 / PM1).